Here is a 686-residue protein sequence, read N- to C-terminus: U3 small nucleolar RNA-associated protein 4 homolog (686 aa).

11 WD repeats span residues 14–53 (YVPS…FQEK), 57–96 (GHES…IKYT), 99–138 (AFGG…IQFA), 143–181 (RQKS…IIRK), 193–231 (KSRC…LVKS), 234–273 (VANA…SNSS), 285–322 (HHTH…EVKN), 324–359 (DAAL…ELWR), 435–474 (SFLR…FKHL), 482–521 (GTVE…LHCT), and 524–563 (AYNF…YTEW). Residue K321 forms a Glycyl lysine isopeptide (Lys-Gly) (interchain with G-Cter in SUMO2) linkage.

As to quaternary structure, interacts with HIVEP1 Interacts with NOL11. Part of the small subunit (SSU) processome, composed of more than 70 proteins and the RNA chaperone small nucleolar RNA (snoRNA) U3. May be a component of the proposed t-UTP subcomplex of the ribosomal small subunit (SSU) processome containing at least UTP4, WDR43, HEATR1, UTP15, WDR75. Post-translationally, may be phosphorylated during mitosis; may control the association of this protein with WRD43 and UTP15. As to expression, expressed in liver.

The protein resides in the nucleus. It localises to the nucleolus. The protein localises to the chromosome. Functionally, ribosome biogenesis factor. Involved in nucleolar processing of pre-18S ribosomal RNA. Part of the small subunit (SSU) processome, first precursor of the small eukaryotic ribosomal subunit. During the assembly of the SSU processome in the nucleolus, many ribosome biogenesis factors, an RNA chaperone and ribosomal proteins associate with the nascent pre-rRNA and work in concert to generate RNA folding, modifications, rearrangements and cleavage as well as targeted d Involved in SSU pre-rRNA processing at sites A', A0, 1 and 2b. Required for optimal pre-ribosomal RNA transcription by RNA polymerase. May be a transcriptional regulator. The polypeptide is U3 small nucleolar RNA-associated protein 4 homolog (Utp4) (Mus musculus (Mouse)).